Consider the following 239-residue polypeptide: SH3 domain-binding glutamic acid-rich protein (239 aa).

Residues 124 to 130 (NGIPLPP) carry the SH3-binding motif. Residues 159 to 239 (GLAPPPDSKG…GEEPGEDEDS (81 aa)) form a disordered region. A compositionally biased stretch (basic and acidic residues) spans 167–185 (KGSEKAEEGGETEAQKEGS). Acidic residues predominate over residues 198 to 239 (NEEEGETATEETEEIAMEGAEGEAEEEEETAEGEEPGEDEDS).

This sequence belongs to the SH3BGR family. As to expression, expressed in heart and skeletal muscle.

In Homo sapiens (Human), this protein is SH3 domain-binding glutamic acid-rich protein (SH3BGR).